The primary structure comprises 500 residues: Glycerol kinase (500 aa).

Threonine 16 is a binding site for ADP. ATP contacts are provided by threonine 16 and threonine 17. Residue threonine 16 coordinates sn-glycerol 3-phosphate. Position 20 (arginine 20) interacts with ADP. The sn-glycerol 3-phosphate site is built by arginine 86, glutamate 87, tyrosine 138, and aspartate 243. Glycerol is bound by residues arginine 86, glutamate 87, tyrosine 138, aspartate 243, and glutamine 244. The ADP site is built by threonine 265 and glycine 313. ATP-binding residues include threonine 265, glycine 313, glutamine 317, and glycine 414. ADP is bound by residues glycine 414 and asparagine 418.

The protein belongs to the FGGY kinase family.

The enzyme catalyses glycerol + ATP = sn-glycerol 3-phosphate + ADP + H(+). It functions in the pathway polyol metabolism; glycerol degradation via glycerol kinase pathway; sn-glycerol 3-phosphate from glycerol: step 1/1. Inhibited by fructose 1,6-bisphosphate (FBP). In terms of biological role, key enzyme in the regulation of glycerol uptake and metabolism. Catalyzes the phosphorylation of glycerol to yield sn-glycerol 3-phosphate. In Trichormus variabilis (strain ATCC 29413 / PCC 7937) (Anabaena variabilis), this protein is Glycerol kinase.